Here is a 253-residue protein sequence, read N- to C-terminus: Acidic endochitinase Q (253 aa).

The N-terminal stretch at 1–24 (MEFSGSPMALFCCVFFLFLTGSLA) is a signal peptide. The active-site Proton donor is the Glu92. The cysteines at positions 212 and 244 are disulfide-linked.

Belongs to the glycosyl hydrolase 19 family. Chitinase class I subfamily.

It localises to the secreted. The catalysed reaction is Random endo-hydrolysis of N-acetyl-beta-D-glucosaminide (1-&gt;4)-beta-linkages in chitin and chitodextrins.. Its function is as follows. Defense against chitin-containing fungal pathogens. This is Acidic endochitinase Q from Nicotiana tabacum (Common tobacco).